Here is an 864-residue protein sequence, read N- to C-terminus: MTQDLSKHTPMMAQYLQLKAQNPDILLFYRMGDFYELFYDDAKKAAALLDISLTKRGASAGEPIPMAGVPYHAVEGYLAKLVSLGESVAICEQIGDPATSKGPVERKVVRIVTPGTVSDEALLPERQDNLVAAIYEEKGVFAIATLDMTSGRFLITELPNKEALAAELQRLQLAEILYAEDFSAAEILNNYKGLRRRPVWEFELVTAINLLNRQFGTQSLAGFGVEKAVVALCAAGCVLHYAQETQRTALPHINSIHLAQNSDTVLLDAATRRNLELTQNLAGGTENTLAAVLDKCVTPMGSRLLKRWIHQPIRDLEKLKKRQDIIDTLQKEQRIEPLQPLLQNVGDMERILARVALRSARPRDLTRLRTALAQLPDIAKNAKNLTASLDALVAQIGDFSELHALLERAIIETPPQLIRDGGVIAEGYNAELDEWRELSAGATQYLENLEIREREATGIDTLKIGFNAVHGYYIQISQGQAHKAPMHYVRRQTLKNAERYIIPELKTYEDKVLKAKGASLALEKQLYDELFDLLMPRLGEMQLAAMALSELDVLTNLAERAESLNYVRPTFSLQRGVNIKGGRHPVVEQVLKDPFIANPVFLNAQRHLLVVTGPNMGGKSTYMRQIALISLMAYIGSFVPADSAEIGALDRIFTRIGASDDLASGRSTFMVEMTEMANILHQATENSLVLIDEIGRGTSTYDGLSLAWACAEWLAKKTQSLTLFATHYFELTSLPSQLKGVANVHLDAREHQDSIVFMHSVQEGAASKSYGLAVAALAGVPKQVIQLAKQRLAHLEEISLQTKEAHDNPQGDLLFAADLQETPQIQPLVAQQSELEKALMSIDPDELTPRQALEALYRLKKLMA.

Position 613 to 620 (613 to 620 (GPNMGGKS)) interacts with ATP.

Belongs to the DNA mismatch repair MutS family.

This protein is involved in the repair of mismatches in DNA. It is possible that it carries out the mismatch recognition step. This protein has a weak ATPase activity. The polypeptide is DNA mismatch repair protein MutS (Actinobacillus pleuropneumoniae serotype 3 (strain JL03)).